Here is a 245-residue protein sequence, read N- to C-terminus: tRNA pseudouridine synthase A (245 aa).

The Nucleophile role is filled by Asp52. Tyr110 contributes to the substrate binding site.

Belongs to the tRNA pseudouridine synthase TruA family. Homodimer.

The enzyme catalyses uridine(38/39/40) in tRNA = pseudouridine(38/39/40) in tRNA. Functionally, formation of pseudouridine at positions 38, 39 and 40 in the anticodon stem and loop of transfer RNAs. This is tRNA pseudouridine synthase A from Borrelia turicatae (strain 91E135).